A 274-amino-acid chain; its full sequence is Large ribosomal subunit protein uL2cz/uL2cy (274 aa).

The interval 224–274 (NPVDHPHGGGEGRAPIGRKKPTTPWGYPALGRRSRKRNKYSDNLILRRRSK) is disordered.

This sequence belongs to the universal ribosomal protein uL2 family. Part of the 50S ribosomal subunit.

The protein localises to the plastid. Its subcellular location is the chloroplast. This Panax ginseng (Korean ginseng) protein is Large ribosomal subunit protein uL2cz/uL2cy (rpl2-A).